The chain runs to 1056 residues: MAGNDWINSYLEAILDVGGQGIDASTGKTSTAPPSLLLRERGHFSPSRYFVEEVISGFDETDLHRSWVRAASTRSPQERNTRLENLCWRIWNLARKKKQIEGEEAQRLAKRHVERERGRREATADMSEDLSEGERGDTVADMLFASESTKGRMRRISSVEMMDNWANTFKEKKLYVVLISLHGLIRGENMELGRDSDTGGQVKYVVELARALGSMPGVYRVDLLTRQVSAPGVDWSYGEPTEMLSSRNSENSTEQLGESSGAYIIRIPFGPKDKYVAKELLWPYIPEFVDGALSHIKQMSKVLGEQIGGGLPVWPASVHGHYADAGDSAALLSGALNVPMVFTGHSLGRDKLDQLLKQGRLSREEVDATYKIMRRIEAEELCLDASEIVITSTRQEIEEQWQLYHGFDLVLERKLRARMRRGVSCHGRFMPRMAKIPPGMEFNHIAPEDADMDTDIDGHKESNANPDPVIWSEIMRFFSNGRKPMILALARPDPKKNLTTLVKAFGECRPLRELANLTLIIGNRDDIDEMSTTSSSVLISILKLIDKYDLYGQVAYPKHHKQSDVPDIYRLAAKTKGVFINPAFIEPFGLTLIEAAAYGLPIVATKNGGPVDIIGVLDNGLLIDPHDQKSIADALLKLVADKHLWTKCRQNGLKNIHLFSWPEHCKNYLSRIASCKPRQPNWQRIDEGSENSDTDSAGDSLRDIQDISLNLKLSLDAERTEGGNSFDDSLDSEEANAKRKIENAVAKLSKSMDKAQVDVGNLKFPAIRRRKCIFVIALDCDVTSDLLQVIKTVISIVGEQRPTGSIGFILSTSMTLSEVDSLLDSGGLRPADFDAFICNSGSELYYPSTDYSESPFVLDQDYYSHIDYRWGGEGLWKTLVKWAASVNEKKGENAPNIVIADETSSTTHCYAFKVNDFTLAPPAKELRKMMRIQALRCHAIYCQNGTRLNVIPVLASRSQALRYLFMRWGVELSNFVVFVGESGDTDYEGLLGGVHKTVILKGIGSNTSNFHATRAYPMEHVMPVDSPNMFQTGGCNIDDISDALSKIGCLKAQKSL.

Residues 112 to 123 (HVERERGRREAT) are compositionally biased toward basic and acidic residues. A disordered region spans residues 112-132 (HVERERGRREATADMSEDLSE). Ser158 and Ser424 each carry phosphoserine. The tract at residues 681–700 (NWQRIDEGSENSDTDSAGDS) is disordered.

It belongs to the glycosyltransferase 1 family. In terms of assembly, homodimer or homotetramer. Post-translationally, phosphorylated at Ser-158 and Ser-424.

It catalyses the reaction beta-D-fructose 6-phosphate + UDP-alpha-D-glucose = sucrose 6(F)-phosphate + UDP + H(+). Its pathway is glycan biosynthesis; sucrose biosynthesis; sucrose from D-fructose 6-phosphate and UDP-alpha-D-glucose: step 1/2. With respect to regulation, activity is regulated by phosphorylation and moderated by concentration of metabolites and light. Functionally, plays a role in photosynthetic sucrose synthesis by catalyzing the rate-limiting step of sucrose biosynthesis from UDP-glucose and fructose- 6-phosphate. Involved in the regulation of carbon partitioning in the leaves of plants. May regulate the synthesis of sucrose and therefore play a major role as a limiting factor in the export of photoassimilates out of the leaf. Plays a role for sucrose availability that is essential for plant growth and fiber elongation. This chain is Sucrose-phosphate synthase (SPS1), found in Spinacia oleracea (Spinach).